The primary structure comprises 506 residues: Cytochrome P450 52B1 (506 aa).

C451 is a heme binding site.

It belongs to the cytochrome P450 family. Requires heme as cofactor.

Functionally, together with an NADPH cytochrome P450 the enzyme system catalyzes the terminal hydroxylation as the first step in the assimilation of alkanes and fatty acids. The chain is Cytochrome P450 52B1 (CYP52B1) from Candida tropicalis (Yeast).